Here is a 221-residue protein sequence, read N- to C-terminus: uncharacterized protein (221 aa).

A signal peptide spans 1–23 (MNKLIQLALFFTLMLTGCSNSST). The disordered stretch occupies residues 67–221 (ELGKRKAKEE…QGYIDPEDAP (155 aa)). A compositionally biased stretch (basic and acidic residues) spans 68 to 150 (LGKRKAKEEA…EQKANAEKKR (83 aa)). Residues 70-161 (KRKAKEEAEK…SQAQRQQTEA (92 aa)) are a coiled coil. Residues 152-161 (SQAQRQQTEA) are compositionally biased toward polar residues. Positions 162–174 (PSSNSQDPPSSSS) are enriched in low complexity. Residues 175 to 184 (QTDKTIQQPA) show a composition bias toward polar residues. Residues 195–205 (YEERKKWHDDQ) are compositionally biased toward basic and acidic residues.

This is an uncharacterized protein from Bacillus subtilis (strain 168).